A 219-amino-acid polypeptide reads, in one-letter code: Dehydration-responsive element-binding protein 1E (219 aa).

Positions 1 to 19 (MEWAYYGSGYSSSGTPSPV) are enriched in low complexity. Residues 1 to 44 (MEWAYYGSGYSSSGTPSPVGGDGDEDSYMTVSSAPPKRRAGRTK) are disordered. The segment at residues 52–109 (VYKGVRSRNPGRWVCEVREPHGKQRIWLGTFETAEMAARAHDVAAMALRGRAACLNFA) is a DNA-binding region (AP2/ERF).

It belongs to the AP2/ERF transcription factor family. ERF subfamily.

It is found in the nucleus. Its function is as follows. Transcriptional activator that binds specifically to the DNA sequence 5'-[AG]CCGAC-3'. Binding to the C-repeat/DRE element mediates high salinity- and dehydration-inducible transcription. The protein is Dehydration-responsive element-binding protein 1E (DREB1E) of Oryza sativa subsp. indica (Rice).